The following is a 371-amino-acid chain: uncharacterized protein (371 aa).

The stretch at 287-323 (EVVTALDRYRQHLRETRERLEEKQGKLLEELKGYESM) forms a coiled coil.

This is an uncharacterized protein from Aspergillus fumigatus (strain ATCC MYA-4609 / CBS 101355 / FGSC A1100 / Af293) (Neosartorya fumigata).